Here is a 430-residue protein sequence, read N- to C-terminus: Trigger factor (430 aa).

A PPIase FKBP-type domain is found at 163 to 248 (GNIAIIDFKG…IKDIKVKELP (86 aa)).

Belongs to the FKBP-type PPIase family. Tig subfamily.

It is found in the cytoplasm. It carries out the reaction [protein]-peptidylproline (omega=180) = [protein]-peptidylproline (omega=0). Functionally, involved in protein export. Acts as a chaperone by maintaining the newly synthesized protein in an open conformation. Functions as a peptidyl-prolyl cis-trans isomerase. The sequence is that of Trigger factor from Clostridium botulinum (strain Loch Maree / Type A3).